Reading from the N-terminus, the 280-residue chain is MLFLEGLMQYGFLQKALITSVTVGIVSGVIGSFIILRGMSLMGDAISHAVLPGVAISYMMGMNFFIGAATFGIAAALGIGFVNQKSRIKNDTAIGIVFSAFFALGIILISFAKSSTDLYHILFGNVLAVRSSDMWMTIIIAILVISLVAIFYKEFLVSSFDPVMAEAYGLNVRFLHYFLMLLLTLVTVSALQTVGIILVVAMLITPAATAYLLTNKLSKMIMLASTFGAVSAIIGLYFSYIFNLASGAAMVLVATIIFFIAFLFAPKQGLLFSKKKEVIE.

A run of 9 helical transmembrane segments spans residues 16 to 36 (ALIT…FIIL), 41 to 61 (LMGD…YMMG), 62 to 82 (MNFF…IGFV), 92 to 112 (TAIG…ISFA), 137 to 157 (TIII…EFLV), 168 to 188 (YGLN…LVTV), 193 to 213 (TVGI…AYLL), 221 to 241 (IMLA…FSYI), and 244 to 264 (LASG…AFLF).

This sequence belongs to the ABC-3 integral membrane protein family.

The protein localises to the cell membrane. Its function is as follows. This protein is probably a component of a manganese permease, a binding protein-dependent, ATP-driven transport system. This is Manganese transport system membrane protein MntC (mntC) from Listeria innocua serovar 6a (strain ATCC BAA-680 / CLIP 11262).